The sequence spans 205 residues: uncharacterized protein (205 aa).

An N-terminal signal peptide occupies residues 1 to 40 (MSAGKSYRKKMKQRRMNMKISKYALGILMLSLVFVLSACG). The segment at 44–82 (STKESTHDNHSDSSTHEEMDHSGSADVPEGLQESKNPKY) is disordered. Basic and acidic residues predominate over residues 47-66 (ESTHDNHSDSSTHEEMDHSG).

This is an uncharacterized protein from Bacillus subtilis (strain 168).